Consider the following 475-residue polypeptide: Aspartyl/glutamyl-tRNA(Asn/Gln) amidotransferase subunit B (475 aa).

The protein belongs to the GatB/GatE family. GatB subfamily. In terms of assembly, heterotrimer of A, B and C subunits.

The catalysed reaction is L-glutamyl-tRNA(Gln) + L-glutamine + ATP + H2O = L-glutaminyl-tRNA(Gln) + L-glutamate + ADP + phosphate + H(+). It carries out the reaction L-aspartyl-tRNA(Asn) + L-glutamine + ATP + H2O = L-asparaginyl-tRNA(Asn) + L-glutamate + ADP + phosphate + 2 H(+). In terms of biological role, allows the formation of correctly charged Asn-tRNA(Asn) or Gln-tRNA(Gln) through the transamidation of misacylated Asp-tRNA(Asn) or Glu-tRNA(Gln) in organisms which lack either or both of asparaginyl-tRNA or glutaminyl-tRNA synthetases. The reaction takes place in the presence of glutamine and ATP through an activated phospho-Asp-tRNA(Asn) or phospho-Glu-tRNA(Gln). In Helicobacter pylori (strain HPAG1), this protein is Aspartyl/glutamyl-tRNA(Asn/Gln) amidotransferase subunit B.